The sequence spans 583 residues: Arginine--tRNA ligase (583 aa).

The 'HIGH' region motif lies at 121-131 (ANPTGPLHLGH).

The protein belongs to the class-I aminoacyl-tRNA synthetase family. Monomer.

The protein localises to the cytoplasm. It catalyses the reaction tRNA(Arg) + L-arginine + ATP = L-arginyl-tRNA(Arg) + AMP + diphosphate. The chain is Arginine--tRNA ligase (argS) from Aquifex aeolicus (strain VF5).